A 243-amino-acid chain; its full sequence is Small ribosomal subunit protein uS3 (243 aa).

One can recognise a KH type-2 domain in the interval 38-106; sequence IRKYLNARLA…DIQINIFEVK (69 aa). A disordered region spans residues 214-243; the sequence is PNFTQSKESGRGNNGGNNGGKNFKRKKNNR.

The protein belongs to the universal ribosomal protein uS3 family. As to quaternary structure, part of the 30S ribosomal subunit. Forms a tight complex with proteins S10 and S14.

Its function is as follows. Binds the lower part of the 30S subunit head. Binds mRNA in the 70S ribosome, positioning it for translation. The chain is Small ribosomal subunit protein uS3 from Bacteroides thetaiotaomicron (strain ATCC 29148 / DSM 2079 / JCM 5827 / CCUG 10774 / NCTC 10582 / VPI-5482 / E50).